The sequence spans 47 residues: GVPCLCDSDGPSVRGNTLSGTLWLAGCPSGWHNCKAHGPTIGWCCKK.

3 disulfides stabilise this stretch: C4–C44, C6–C34, and C27–C45.

The protein belongs to the sea anemone sodium channel inhibitory toxin family. Type I subfamily.

Its subcellular location is the secreted. The protein resides in the nematocyst. Its function is as follows. Binds specifically to voltage-gated sodium channels (Nav) (site 3), thereby delaying their inactivation during signal transduction. Has a heart stimulation effect on isolated rat atria that is higher than that of Hk7a, Hk8a and Hk16a. The protein is Delta-actitoxin-Aspp1a of Anthopleura sp. (strain 'Zhanjiang') (Sea anemone).